The primary structure comprises 602 residues: MGQIHGLSPTPIPKAPRGLSTHHWLNFLQAAYRLQPRPSDFDFQQLRRFLKLALKTPIWLNPIDYSLLASLIPKGYPGRVVEIINILVKNQVSPSAPAAPVPTPICPTTTPPPPPPPSPEAHVPPPYVEPTTTQCFPILHPPGAPSAHRPWQMKDLQAIKQEVSSSALGSPQFMQTLRLAVQQFDPTAKDLQDLLQYLCSSLVVSLHHQQLNTLITEAETRGMTGYNPMAGPLRMQANNPAQQGLRREYQNLWLAAFSTLPGNTRDPSWAAILQGLEEPYCAFVERLNVALDNGLPEGTPKEPILRSLAYSNANKECQKILQARGHTNSPLGEMLRTCQAWTPKDKTKVLVVQPRRPPPTQPCFRCGKVGHWSRDCTQPRPPPGPCPLCQDPSHWKRDCPQLKPPQEEGEPLLLDLPSTSGTTEEKNLLKGGDLISPHPDQDISILPLIPLRQQQQPILGVRISVMGQTPQPTQALLDTGADLTVIPQTLVPGPVKLHDTLILGASGQTNTQFKLLQTPLHIFLPFRRSPVILSSCLLDTHNKWTIIGRDALQQCQGLLYLPDDPSPHQLLPIATPNTIGLEHLPPPPQVDQFPLNLSASRP.

The N-myristoyl glycine; by host moiety is linked to residue Gly-2. Positions 94–97 (PSAP) match the PTAP/PSAP motif motif. Residues 94 to 121 (PSAPAAPVPTPICPTTTPPPPPPPSPEA) form a disordered region. The segment covering 97-121 (PAAPVPTPICPTTTPPPPPPPSPEA) has biased composition (pro residues). Residues 124 to 127 (PPPY) carry the PPXY motif motif. CCHC-type zinc fingers lie at residues 361-378 (QPCF…DCTQ) and 384-401 (GPCP…DCPQ). The tract at residues 399–425 (CPQLKPPQEEGEPLLLDLPSTSGTTEE) is disordered. Positions 473–551 (TQALLDTGAD…NKWTIIGRDA (79 aa)) constitute a Peptidase A2 domain. Asp-478 acts as the Protease; shared with dimeric partner in catalysis. A disordered region spans residues 582 to 602 (EHLPPPPQVDQFPLNLSASRP).

Homodimer; the homodimers are part of the immature particles. Interacts with human TSG101 and NEDD4; these interactions are essential for budding and release of viral particles. In terms of assembly, homodimer; further assembles as homohexamers. Post-translationally, specific enzymatic cleavages by the viral protease yield mature proteins. The polyprotein is cleaved during and after budding, this process is termed maturation. The protease is autoproteolytically processed at its N- and C-termini. In terms of processing, phosphorylation of the matrix protein p19 by MAPK1 seems to play a role in budding. Myristoylated. Myristoylation of the matrix (MA) domain mediates the transport and binding of Gag polyproteins to the host plasma membrane and is required for the assembly of viral particles.

It is found in the virion. Functionally, the matrix domain targets Gag, Gag-Pro and Gag-Pro-Pol polyproteins to the plasma membrane via a multipartite membrane binding signal, that includes its myristoylated N-terminus. Its function is as follows. Matrix protein. Forms the spherical core of the virus that encapsulates the genomic RNA-nucleocapsid complex. In terms of biological role, binds strongly to viral nucleic acids and promote their aggregation. Also destabilizes the nucleic acids duplexes via highly structured zinc-binding motifs. Functionally, the aspartyl protease mediates proteolytic cleavages of Gag and Gag-Pol polyproteins during or shortly after the release of the virion from the plasma membrane. Cleavages take place as an ordered, step-wise cascade to yield mature proteins. This process is called maturation. Displays maximal activity during the budding process just prior to particle release from the cell (Potential). Cleaves the translation initiation factor eIF4G leading to the inhibition of host cap-dependent translation. The sequence is that of Gag-Pro polyprotein (gag-pro) from Homo sapiens (Human).